Here is a 461-residue protein sequence, read N- to C-terminus: Glyceraldehyde-3-phosphate dehydrogenase-like protein (461 aa).

T421 carries the post-translational modification Phosphothreonine.

It belongs to the glyceraldehyde-3-phosphate dehydrogenase family.

The chain is Glyceraldehyde-3-phosphate dehydrogenase-like protein (gap2) from Pseudomonas aeruginosa (strain UCBPP-PA14).